Consider the following 428-residue polypeptide: Acetyltransferase sirH (428 aa).

N-linked (GlcNAc...) asparagine glycosylation occurs at asparagine 8. 6 consecutive transmembrane segments (helical) span residues leucine 33 to leucine 53, valine 55 to serine 75, alanine 78 to valine 98, leucine 305 to serine 325, glycine 329 to leucine 349, and phenylalanine 366 to phenylalanine 386.

The protein belongs to the wax synthase family.

It localises to the membrane. It participates in polyketide biosynthesis. Its function is as follows. Acetyltransferase; part of the gene cluster that mediates the biosynthesis of asperlin, a polyketide showing anti-inflammatory, antitumor and antibiotic activities. The first step of the asperlin biosynthesis is the production of the intermediate 2,4,6-octatrienoic acid by the highly redusing polyketide synthase alnA with cleavage of the PKS product by the esterase alnB. 2,4,6-octatrienoic acid is further converted to asperlin via several steps involving the remaining enzymes from the cluster. The protein is Acetyltransferase sirH of Emericella nidulans (strain FGSC A4 / ATCC 38163 / CBS 112.46 / NRRL 194 / M139) (Aspergillus nidulans).